We begin with the raw amino-acid sequence, 237 residues long: Phosphoribosylaminoimidazole-succinocarboxamide synthase (237 aa).

The protein belongs to the SAICAR synthetase family.

It carries out the reaction 5-amino-1-(5-phospho-D-ribosyl)imidazole-4-carboxylate + L-aspartate + ATP = (2S)-2-[5-amino-1-(5-phospho-beta-D-ribosyl)imidazole-4-carboxamido]succinate + ADP + phosphate + 2 H(+). It participates in purine metabolism; IMP biosynthesis via de novo pathway; 5-amino-1-(5-phospho-D-ribosyl)imidazole-4-carboxamide from 5-amino-1-(5-phospho-D-ribosyl)imidazole-4-carboxylate: step 1/2. The polypeptide is Phosphoribosylaminoimidazole-succinocarboxamide synthase (Edwardsiella ictaluri (strain 93-146)).